We begin with the raw amino-acid sequence, 201 residues long: Sterile alpha motif domain-containing protein 12 (201 aa).

Residues 77 to 143 form the SAM domain; it reads WTQQDVCKWL…LQQVLQLKVR (67 aa).

Expressed in the brain.

This chain is Sterile alpha motif domain-containing protein 12 (SAMD12), found in Homo sapiens (Human).